The chain runs to 520 residues: Cytochrome P450 315a1, mitochondrial (520 aa).

Heme is bound at residue C466.

It belongs to the cytochrome P450 family. Heme serves as cofactor. Complex coexpression pattern of dib (disembodied) and sad (shade) in the early embryo that restricts to the prothoracic gland cells of the developing ring gland during late embryogenesis. In larvae and adult, coexpression is seen in prothoracic gland and follicle cells of the ovary. In adults, coexpression is seen in the follicle cells, sad only is expressed in nurse cells.

The protein resides in the mitochondrion membrane. The catalysed reaction is 2-deoxyecdysone + 2 reduced [adrenodoxin] + O2 + 2 H(+) = ecdysone + 2 oxidized [adrenodoxin] + H2O. It catalyses the reaction 2,22-dideoxyecdysone + 2 reduced [adrenodoxin] + O2 + 2 H(+) = 22-deoxyecdysone + 2 oxidized [adrenodoxin] + H2O. Its pathway is steroid biosynthesis; ecdysteroid biosynthesis. Its function is as follows. Required for CNS development: midline glial cells. Involved in the metabolism of insect hormones: responsible for ecdysteroid C2-hydroxylase activity. May be involved in the breakdown of synthetic insecticides. The sequence is that of Cytochrome P450 315a1, mitochondrial from Drosophila melanogaster (Fruit fly).